Reading from the N-terminus, the 91-residue chain is Small ribosomal subunit protein uS19 (91 aa).

The protein belongs to the universal ribosomal protein uS19 family.

Protein S19 forms a complex with S13 that binds strongly to the 16S ribosomal RNA. This chain is Small ribosomal subunit protein uS19, found in Pseudomonas syringae pv. syringae (strain B728a).